The primary structure comprises 393 residues: Small ribosomal subunit protein bS1 (393 aa).

4 consecutive S1 motif domains span residues 16–90 (GDKV…LSKR), 108–173 (NQTI…LSRK), 194–262 (GDVI…LSIK), and 279–348 (GDVI…LSIK). The segment covering 356–369 (VIESDSETTQSYLD) has biased composition (polar residues). The segment at 356–381 (VIESDSETTQSYLDNGSDDEDNPTLG) is disordered.

Belongs to the bacterial ribosomal protein bS1 family.

Binds mRNA; thus facilitating recognition of the initiation point. It is needed to translate mRNA with a short Shine-Dalgarno (SD) purine-rich sequence. This Staphylococcus saprophyticus subsp. saprophyticus (strain ATCC 15305 / DSM 20229 / NCIMB 8711 / NCTC 7292 / S-41) protein is Small ribosomal subunit protein bS1 (rpsA).